A 257-amino-acid chain; its full sequence is MSRPLITRSPASPLNNQGIPTPAQLTKSNAPVHIDVGGHMYTSSLATLTKYPESRIGRLFDGTEPIVLDSLKQHYFIDRDGQMFRYILNFLRTSKLLIPDDFKDYTLLYEEAKYFQLQPMLLEMERWKQDRETGRFSRPCECLVVRVAPDLGERITLSGDKSLIEEVFPEIGDVMCNSVNAGWNHDSTHVIRFPLNGYCHLNSVQVLERLQQRGFEIVGSCGGGVDSSQFSEYVLRRELRRTPRVPSVIRIKQEPLD.

The segment at 1–25 is disordered; sequence MSRPLITRSPASPLNNQGIPTPAQL. Ser-9 and Ser-12 each carry phosphoserine. Residues 9–25 are compositionally biased toward polar residues; the sequence is SPASPLNNQGIPTPAQL. Positions 30–100 constitute a BTB domain; sequence APVHIDVGGH…LRTSKLLIPD (71 aa).

In terms of assembly, forms homopentamers. Interacts with KCTD15, probably forming heteropentamers depending on its abundance in a cell-type dependent manner. Interacts with TFAP2A, TFAP2B and TFAP2C via the BTB domain. Post-translationally, sumoylated. As to expression, expressed in mammary gland, kidney, brain and ovary.

Its subcellular location is the nucleus. May repress the transcriptional activity of AP-2 family members, including TFAP2A, TFAP2B and TFAP2C to various extent. This is BTB/POZ domain-containing protein KCTD1 (KCTD1) from Homo sapiens (Human).